We begin with the raw amino-acid sequence, 183 residues long: Ribosome maturation factor RimM (183 aa).

A PRC barrel domain is found at 102-183; the sequence is DDDFYWHQLE…CITVDWDPEF (82 aa).

This sequence belongs to the RimM family. As to quaternary structure, binds ribosomal protein uS19.

It localises to the cytoplasm. In terms of biological role, an accessory protein needed during the final step in the assembly of 30S ribosomal subunit, possibly for assembly of the head region. Essential for efficient processing of 16S rRNA. May be needed both before and after RbfA during the maturation of 16S rRNA. It has affinity for free ribosomal 30S subunits but not for 70S ribosomes. The polypeptide is Ribosome maturation factor RimM (Saccharophagus degradans (strain 2-40 / ATCC 43961 / DSM 17024)).